The chain runs to 473 residues: Photosystem II CP43 reaction center protein (473 aa).

The propeptide occupies Met1–Glu14. Thr15 carries the post-translational modification N-acetylthreonine. Thr15 bears the Phosphothreonine mark. The next 5 helical transmembrane spans lie at Leu69–Ala93, Leu134–Asn155, Lys178–Thr200, Lys255–Ser275, and Trp291–Ala312. Glu367 contributes to the [CaMn4O5] cluster binding site. Residues Arg447–Pro471 form a helical membrane-spanning segment.

It belongs to the PsbB/PsbC family. PsbC subfamily. In terms of assembly, PSII is composed of 1 copy each of membrane proteins PsbA, PsbB, PsbC, PsbD, PsbE, PsbF, PsbH, PsbI, PsbJ, PsbK, PsbL, PsbM, PsbT, PsbX, PsbY, PsbZ, Psb30/Ycf12, at least 3 peripheral proteins of the oxygen-evolving complex and a large number of cofactors. It forms dimeric complexes. Requires Binds multiple chlorophylls and provides some of the ligands for the Ca-4Mn-5O cluster of the oxygen-evolving complex. It may also provide a ligand for a Cl- that is required for oxygen evolution. PSII binds additional chlorophylls, carotenoids and specific lipids. as cofactor.

It is found in the plastid. The protein localises to the chloroplast thylakoid membrane. One of the components of the core complex of photosystem II (PSII). It binds chlorophyll and helps catalyze the primary light-induced photochemical processes of PSII. PSII is a light-driven water:plastoquinone oxidoreductase, using light energy to abstract electrons from H(2)O, generating O(2) and a proton gradient subsequently used for ATP formation. The chain is Photosystem II CP43 reaction center protein from Anthoceros angustus (Hornwort).